The sequence spans 154 residues: Transcriptional repressor NrdR (154 aa).

Residues 3 to 34 fold into a zinc finger; the sequence is CPYCRHPDSRVVDSREADDGQLIRRRRSCPEC. Positions 46-136 constitute an ATP-cone domain; it reads LAVVKRSGVT…VYRSFESLAD (91 aa).

It belongs to the NrdR family. The cofactor is Zn(2+).

In terms of biological role, negatively regulates transcription of bacterial ribonucleotide reductase nrd genes and operons by binding to NrdR-boxes. This is Transcriptional repressor NrdR from Salinispora arenicola (strain CNS-205).